Consider the following 239-residue polypeptide: Endolytic peptidoglycan transglycosylase RlpA (239 aa).

Residues 1–25 (MTLTRKTLFLLTAAFGIHSFQTASA) form the signal peptide. The 80-residue stretch at 160–239 (VAENKDIFID…GMVRAVLTAG (80 aa)) folds into the SPOR domain.

The protein belongs to the RlpA family.

Functionally, lytic transglycosylase with a strong preference for naked glycan strands that lack stem peptides. The sequence is that of Endolytic peptidoglycan transglycosylase RlpA from Neisseria meningitidis serogroup A / serotype 4A (strain DSM 15465 / Z2491).